We begin with the raw amino-acid sequence, 294 residues long: 4-hydroxy-tetrahydrodipicolinate synthase (294 aa).

A pyruvate-binding site is contributed by threonine 49. Tyrosine 136 serves as the catalytic Proton donor/acceptor. Lysine 164 serves as the catalytic Schiff-base intermediate with substrate. Isoleucine 207 contributes to the pyruvate binding site.

It belongs to the DapA family. As to quaternary structure, homotetramer; dimer of dimers.

It is found in the cytoplasm. The catalysed reaction is L-aspartate 4-semialdehyde + pyruvate = (2S,4S)-4-hydroxy-2,3,4,5-tetrahydrodipicolinate + H2O + H(+). It functions in the pathway amino-acid biosynthesis; L-lysine biosynthesis via DAP pathway; (S)-tetrahydrodipicolinate from L-aspartate: step 3/4. Its function is as follows. Catalyzes the condensation of (S)-aspartate-beta-semialdehyde [(S)-ASA] and pyruvate to 4-hydroxy-tetrahydrodipicolinate (HTPA). In Natronomonas pharaonis (strain ATCC 35678 / DSM 2160 / CIP 103997 / JCM 8858 / NBRC 14720 / NCIMB 2260 / Gabara) (Halobacterium pharaonis), this protein is 4-hydroxy-tetrahydrodipicolinate synthase.